The primary structure comprises 310 residues: Porphobilinogen deaminase (310 aa).

Cys-243 carries the S-(dipyrrolylmethanemethyl)cysteine modification.

The protein belongs to the HMBS family. As to quaternary structure, monomer. Dipyrromethane serves as cofactor.

It carries out the reaction 4 porphobilinogen + H2O = hydroxymethylbilane + 4 NH4(+). It participates in porphyrin-containing compound metabolism; protoporphyrin-IX biosynthesis; coproporphyrinogen-III from 5-aminolevulinate: step 2/4. Tetrapolymerization of the monopyrrole PBG into the hydroxymethylbilane pre-uroporphyrinogen in several discrete steps. The chain is Porphobilinogen deaminase from Mannheimia succiniciproducens (strain KCTC 0769BP / MBEL55E).